A 198-amino-acid polypeptide reads, in one-letter code: Holliday junction branch migration complex subunit RuvA (198 aa).

The segment at 1–63 (MYDYIKGQLT…EDAHLLFGFH (63 aa)) is domain I. The segment at 64-142 (TEDEKDVFLK…EAPQETGNTK (79 aa)) is domain II. Positions 143–147 (ARSNK) are flexible linker. The tract at residues 148–198 (AGNTQLDEAIEALLALGYKAAELKKIRAFFEGTSETAEQYIKSALKLLMKG) is domain III.

This sequence belongs to the RuvA family. In terms of assembly, homotetramer. Forms an RuvA(8)-RuvB(12)-Holliday junction (HJ) complex. HJ DNA is sandwiched between 2 RuvA tetramers; dsDNA enters through RuvA and exits via RuvB. An RuvB hexamer assembles on each DNA strand where it exits the tetramer. Each RuvB hexamer is contacted by two RuvA subunits (via domain III) on 2 adjacent RuvB subunits; this complex drives branch migration. In the full resolvosome a probable DNA-RuvA(4)-RuvB(12)-RuvC(2) complex forms which resolves the HJ.

The protein resides in the cytoplasm. Its function is as follows. The RuvA-RuvB-RuvC complex processes Holliday junction (HJ) DNA during genetic recombination and DNA repair, while the RuvA-RuvB complex plays an important role in the rescue of blocked DNA replication forks via replication fork reversal (RFR). RuvA specifically binds to HJ cruciform DNA, conferring on it an open structure. The RuvB hexamer acts as an ATP-dependent pump, pulling dsDNA into and through the RuvAB complex. HJ branch migration allows RuvC to scan DNA until it finds its consensus sequence, where it cleaves and resolves the cruciform DNA. The sequence is that of Holliday junction branch migration complex subunit RuvA from Streptococcus pyogenes serotype M28 (strain MGAS6180).